Here is a 189-residue protein sequence, read N- to C-terminus: Isopentenyl-diphosphate Delta-isomerase 2 (189 aa).

Residues H24 and H30 each contribute to the Mn(2+) site. The Nudix hydrolase domain occupies 28–160 (ALHRAISIFV…PETYSFWLAA (133 aa)). The active site involves C65. Residue C65 participates in Mg(2+) binding. Residue H67 coordinates Mn(2+). A Mg(2+)-binding site is contributed by E85. Mn(2+) is bound by residues E110 and E112. E112 is an active-site residue.

Belongs to the IPP isomerase type 1 family. Mg(2+) serves as cofactor. The cofactor is Mn(2+).

It localises to the cytoplasm. It carries out the reaction isopentenyl diphosphate = dimethylallyl diphosphate. Its pathway is isoprenoid biosynthesis; dimethylallyl diphosphate biosynthesis; dimethylallyl diphosphate from isopentenyl diphosphate: step 1/1. Its function is as follows. Catalyzes the 1,3-allylic rearrangement of the homoallylic substrate isopentenyl (IPP) to its highly electrophilic allylic isomer, dimethylallyl diphosphate (DMAPP). The chain is Isopentenyl-diphosphate Delta-isomerase 2 from Aromatoleum aromaticum (strain DSM 19018 / LMG 30748 / EbN1) (Azoarcus sp. (strain EbN1)).